Consider the following 156-residue polypeptide: Acyl carrier protein, mitochondrial (156 aa).

The N-terminal 68 residues, 1 to 68 (MAVRVLCACV…GRVTQLCRQY (68 aa)), are a transit peptide targeting the mitochondrion. The region spanning 77–152 (EGIKDRVLYV…EIVDYIADKK (76 aa)) is the Carrier domain. Lys-88 is modified (N6-acetyllysine). An O-(pantetheine 4'-phosphoryl)serine modification is found at Ser-112.

In terms of assembly, mammalian complex I is composed of 45 different subunits. Interacts with ETFRF1. Identified in a complex composed of MALSU1, MIEF1 upstream open reading frame protein and NDUFAB1; within the trimeric complex MIEF1 upstream open reading frame protein functions as a bridging scaffold that interacts with MALSU1 on one side, and with NDUFAB1 on the other side. The complex interacts with the mitochondrial large ribosomal subunit. Interacts with alpha-1-microglobulin chain; this interaction is required for the maintenance of mitochondrial redox homeostasis. Component of the mitochondrial core iron-sulfur cluster (ISC) complex composed of NFS1, LYRM4, NDUFAB1, ISCU, FXN, and FDX2; this complex is a heterohexamer containing two copies of each monomer. Component of the cyteine desulfurase complex composed of NFS1, LYRM4 and NDUFAB1; this complex contributes to the stability and cysteine desulfurase activity of NFS1. Phosphopantetheinylation at Ser-112 is essential for interactions with LYR motif-containing proteins.

The protein resides in the mitochondrion. Its function is as follows. Carrier of the growing fatty acid chain in fatty acid biosynthesis. Accessory and non-catalytic subunit of the mitochondrial membrane respiratory chain NADH dehydrogenase (Complex I), which functions in the transfer of electrons from NADH to the respiratory chain. Accessory protein, of the core iron-sulfur cluster (ISC) assembly complex, that regulates, in association with LYRM4, the stability and the cysteine desulfurase activity of NFS1 and participates in the [2Fe-2S] clusters assembly on the scaffolding protein ISCU. The core iron-sulfur cluster (ISC) assembly complex is involved in the de novo synthesis of a [2Fe-2S] cluster, the first step of the mitochondrial iron-sulfur protein biogenesis. This process is initiated by the cysteine desulfurase complex (NFS1:LYRM4:NDUFAB1) that produces persulfide which is delivered on the scaffold protein ISCU in a FXN-dependent manner. Then this complex is stabilized by FDX2 which provides reducing equivalents to accomplish the [2Fe-2S] cluster assembly. Finally, the [2Fe-2S] cluster is transferred from ISCU to chaperone proteins, including HSCB, HSPA9 and GLRX5. This is Acyl carrier protein, mitochondrial from Bos taurus (Bovine).